The sequence spans 90 residues: Small ribosomal subunit protein uS19 (90 aa).

This sequence belongs to the universal ribosomal protein uS19 family.

In terms of biological role, protein S19 forms a complex with S13 that binds strongly to the 16S ribosomal RNA. This Clostridium beijerinckii (strain ATCC 51743 / NCIMB 8052) (Clostridium acetobutylicum) protein is Small ribosomal subunit protein uS19.